We begin with the raw amino-acid sequence, 191 residues long: Probable DNA-directed RNA polymerase subunit delta (191 aa).

The 70-residue stretch at 14–83 (LSMIEVARAI…GENKWGLRSW (70 aa)) folds into the HTH HARE-type domain. The segment at 119–191 (EDAIDYRDDD…EDEEDEEPVL (73 aa)) is disordered.

RNAP is composed of a core of 2 alpha, a beta and a beta' subunits. The core is associated with a delta subunit and one of several sigma factors.

Participates in both the initiation and recycling phases of transcription. In the presence of the delta subunit, RNAP displays an increased specificity of transcription, a decreased affinity for nucleic acids, and an increased efficiency of RNA synthesis because of enhanced recycling. The sequence is that of Probable DNA-directed RNA polymerase subunit delta from Streptococcus pyogenes serotype M6 (strain ATCC BAA-946 / MGAS10394).